Reading from the N-terminus, the 434-residue chain is Ribosomal protein uS12 methylthiotransferase RimO (434 aa).

The 117-residue stretch at 9–125 (PAIFLLSLGC…VLAAIGAKYR (117 aa)) folds into the MTTase N-terminal domain. Residues cysteine 18, cysteine 54, cysteine 88, cysteine 149, cysteine 153, and cysteine 156 each contribute to the [4Fe-4S] cluster site. Positions 135 to 364 (LTPPHYAFLK…MELQEGISAS (230 aa)) constitute a Radical SAM core domain. The region spanning 367-434 (RKLEGQTLKV…AYELFGRISG (68 aa)) is the TRAM domain.

The protein belongs to the methylthiotransferase family. RimO subfamily. [4Fe-4S] cluster is required as a cofactor.

The protein localises to the cytoplasm. It carries out the reaction L-aspartate(89)-[ribosomal protein uS12]-hydrogen + (sulfur carrier)-SH + AH2 + 2 S-adenosyl-L-methionine = 3-methylsulfanyl-L-aspartate(89)-[ribosomal protein uS12]-hydrogen + (sulfur carrier)-H + 5'-deoxyadenosine + L-methionine + A + S-adenosyl-L-homocysteine + 2 H(+). Its function is as follows. Catalyzes the methylthiolation of an aspartic acid residue of ribosomal protein uS12. This chain is Ribosomal protein uS12 methylthiotransferase RimO, found in Chlorobaculum tepidum (strain ATCC 49652 / DSM 12025 / NBRC 103806 / TLS) (Chlorobium tepidum).